A 327-amino-acid polypeptide reads, in one-letter code: Olfactory receptor 51T1 (327 aa).

Residues 1 to 27 are Extracellular-facing; sequence MAIFNNTTSSSSNFLLTAFPGLECAHV. N-linked (GlcNAc...) asparagine glycans are attached at residues Asn5 and Asn6. A helical transmembrane segment spans residues 28–48; sequence WISIPVCCLYTIALLGNSMIF. Residues 49-56 are Cytoplasmic-facing; sequence LVIITKRR. A helical membrane pass occupies residues 57-77; the sequence is LHKPMYYFLSMLAAVDLCLTI. The Extracellular segment spans residues 78-101; the sequence is TTLPTVLGVLWFHAREISFKACFI. Residues 102-122 traverse the membrane as a helical segment; it reads QMFFVHAFSLLESSVLVAMAF. The Cytoplasmic segment spans residues 123–141; sequence DRFVAICNPLNYATILTDR. The chain crosses the membrane as a helical span at residues 142 to 162; the sequence is MVLVIGLVICIRPAVFLLPLL. Residues 163-198 lie on the Extracellular side of the membrane; the sequence is VAINTVSFHGGHELSHPFCYHPEVIKYTYSKPWISS. A helical membrane pass occupies residues 199 to 219; sequence FWGLFLQLYLNGTDVLFILFS. Residues 220-239 are Cytoplasmic-facing; sequence YVLILRTVLGIVARKKQQKA. Residues 240–260 form a helical membrane-spanning segment; that stretch reads LSTCVCHICAVTIFYVPLISL. At 261–275 the chain is on the extracellular side; that stretch reads SLAHRLFHSTPRVLC. The helical transmembrane segment at 276–296 threads the bilayer; sequence STLANIYLLLPPVLNPIIYSL. The Cytoplasmic segment spans residues 297 to 327; that stretch reads KTKTIRQAMFQLLQSKGSWGFNVRGLRGRWD.

The protein belongs to the G-protein coupled receptor 1 family.

Its subcellular location is the cell membrane. Odorant receptor. The chain is Olfactory receptor 51T1 (OR51T1) from Homo sapiens (Human).